The sequence spans 295 residues: Protoheme IX farnesyltransferase (295 aa).

9 helical membrane-spanning segments follow: residues 24–43, 47–69, 94–114, 117–137, 144–164, 171–191, 216–236, 241–261, and 272–292; these read IMYL…PGSI, LALI…NMWY, SALE…AIAV, ISAI…TIWL, NIVI…AVVT, GFVL…ALSL, KYIL…ALFL, FYLG…VSIM, and MFSY…LCSI.

The protein belongs to the UbiA prenyltransferase family. Protoheme IX farnesyltransferase subfamily.

It is found in the cell membrane. It carries out the reaction heme b + (2E,6E)-farnesyl diphosphate + H2O = Fe(II)-heme o + diphosphate. Its pathway is porphyrin-containing compound metabolism; heme O biosynthesis; heme O from protoheme: step 1/1. In terms of biological role, converts heme B (protoheme IX) to heme O by substitution of the vinyl group on carbon 2 of heme B porphyrin ring with a hydroxyethyl farnesyl side group. The chain is Protoheme IX farnesyltransferase from Wolbachia sp. subsp. Brugia malayi (strain TRS).